The chain runs to 149 residues: Large ribosomal subunit protein bL9 (149 aa).

This sequence belongs to the bacterial ribosomal protein bL9 family.

Binds to the 23S rRNA. The chain is Large ribosomal subunit protein bL9 from Helicobacter pylori (strain P12).